A 148-amino-acid polypeptide reads, in one-letter code: CDC25-like phosphatase YCH1 (148 aa).

Met1 is subject to N-acetylmethionine. Positions Leu29–Ser137 constitute a Rhodanese domain.

The protein belongs to the MPI phosphatase family.

The protein resides in the cytoplasm. It localises to the nucleus. Its function is as follows. Protein phosphatase. This chain is CDC25-like phosphatase YCH1 (YCH1), found in Saccharomyces cerevisiae (strain ATCC 204508 / S288c) (Baker's yeast).